We begin with the raw amino-acid sequence, 143 residues long: Large ribosomal subunit protein bL17 (143 aa).

This sequence belongs to the bacterial ribosomal protein bL17 family. As to quaternary structure, part of the 50S ribosomal subunit. Contacts protein L32.

This chain is Large ribosomal subunit protein bL17, found in Chelativorans sp. (strain BNC1).